A 227-amino-acid polypeptide reads, in one-letter code: 27 kDa glycoprotein (227 aa).

Residues 1–17 (MMWKTVLITIFAAGVLA) form the signal peptide. 2 N-linked (GlcNAc...) asparagine glycosylation sites follow: N118 and N173.

Belongs to the UPF0408 family. Expressed in the subesophageal body, fat bodies, hemocytes, midgut and Malpighian tubules. Not expressed in silk glands.

The protein localises to the secreted. The sequence is that of 27 kDa glycoprotein from Bombyx mori (Silk moth).